Reading from the N-terminus, the 356-residue chain is Phosphoserine aminotransferase (356 aa).

Arg-41 serves as a coordination point for L-glutamate. Residues 76-77 (AS), Trp-102, Thr-150, Asp-169, and Gln-192 each bind pyridoxal 5'-phosphate. Lys-193 bears the N6-(pyridoxal phosphate)lysine mark. Residue 234-235 (NT) participates in pyridoxal 5'-phosphate binding.

Belongs to the class-V pyridoxal-phosphate-dependent aminotransferase family. SerC subfamily. In terms of assembly, homodimer. The cofactor is pyridoxal 5'-phosphate.

It localises to the cytoplasm. The enzyme catalyses O-phospho-L-serine + 2-oxoglutarate = 3-phosphooxypyruvate + L-glutamate. It catalyses the reaction 4-(phosphooxy)-L-threonine + 2-oxoglutarate = (R)-3-hydroxy-2-oxo-4-phosphooxybutanoate + L-glutamate. Its pathway is amino-acid biosynthesis; L-serine biosynthesis; L-serine from 3-phospho-D-glycerate: step 2/3. The protein operates within cofactor biosynthesis; pyridoxine 5'-phosphate biosynthesis; pyridoxine 5'-phosphate from D-erythrose 4-phosphate: step 3/5. In terms of biological role, catalyzes the reversible conversion of 3-phosphohydroxypyruvate to phosphoserine and of 3-hydroxy-2-oxo-4-phosphonooxybutanoate to phosphohydroxythreonine. This Flavobacterium psychrophilum (strain ATCC 49511 / DSM 21280 / CIP 103535 / JIP02/86) protein is Phosphoserine aminotransferase.